The chain runs to 538 residues: Bifunctional purine biosynthesis protein PurH (538 aa).

In terms of domain architecture, MGS-like spans 6–158 (KHIPAPDLHR…KNHAYVATVV (153 aa)).

The protein belongs to the PurH family.

It catalyses the reaction (6R)-10-formyltetrahydrofolate + 5-amino-1-(5-phospho-beta-D-ribosyl)imidazole-4-carboxamide = 5-formamido-1-(5-phospho-D-ribosyl)imidazole-4-carboxamide + (6S)-5,6,7,8-tetrahydrofolate. The catalysed reaction is IMP + H2O = 5-formamido-1-(5-phospho-D-ribosyl)imidazole-4-carboxamide. It functions in the pathway purine metabolism; IMP biosynthesis via de novo pathway; 5-formamido-1-(5-phospho-D-ribosyl)imidazole-4-carboxamide from 5-amino-1-(5-phospho-D-ribosyl)imidazole-4-carboxamide (10-formyl THF route): step 1/1. Its pathway is purine metabolism; IMP biosynthesis via de novo pathway; IMP from 5-formamido-1-(5-phospho-D-ribosyl)imidazole-4-carboxamide: step 1/1. This is Bifunctional purine biosynthesis protein PurH from Brucella ovis (strain ATCC 25840 / 63/290 / NCTC 10512).